The primary structure comprises 284 residues: 4-diphosphocytidyl-2-C-methyl-D-erythritol kinase (284 aa).

The active site involves Lys14. 98-108 (PMGGGLGGGSS) lines the ATP pocket. Residue Asp140 is part of the active site.

The protein belongs to the GHMP kinase family. IspE subfamily.

The enzyme catalyses 4-CDP-2-C-methyl-D-erythritol + ATP = 4-CDP-2-C-methyl-D-erythritol 2-phosphate + ADP + H(+). The protein operates within isoprenoid biosynthesis; isopentenyl diphosphate biosynthesis via DXP pathway; isopentenyl diphosphate from 1-deoxy-D-xylulose 5-phosphate: step 3/6. Catalyzes the phosphorylation of the position 2 hydroxy group of 4-diphosphocytidyl-2C-methyl-D-erythritol. The chain is 4-diphosphocytidyl-2-C-methyl-D-erythritol kinase from Shewanella baltica (strain OS195).